Consider the following 188-residue polypeptide: dCTP deaminase (188 aa).

DCTP contacts are provided by residues lysine 111–arginine 116, threonine 135–glutamate 137, glutamine 156, tyrosine 170, and glutamine 180. Catalysis depends on glutamate 137, which acts as the Proton donor/acceptor.

This sequence belongs to the dCTP deaminase family. As to quaternary structure, homotrimer.

It carries out the reaction dCTP + H2O + H(+) = dUTP + NH4(+). It functions in the pathway pyrimidine metabolism; dUMP biosynthesis; dUMP from dCTP (dUTP route): step 1/2. Functionally, catalyzes the deamination of dCTP to dUTP. This chain is dCTP deaminase, found in Neisseria gonorrhoeae (strain ATCC 700825 / FA 1090).